The primary structure comprises 327 residues: Beta-1,4-galactosyltransferase 7 (327 aa).

The Cytoplasmic segment spans residues 1–30; sequence MFPSRRKAAQLPWEDGRSGLLSGGLPRKCS. Residues 31-51 traverse the membrane as a helical; Signal-anchor for type II membrane protein segment; it reads VFHLFVACLSLGFFSLLWLQL. Over 52–327 the chain is Lumenal; that stretch reads SCSGDVARAV…KTATPWCTFS (276 aa). The tract at residues 63-87 is disordered; it reads GQGQETSGPPRACPPEPPPEHWEED. UDP-alpha-D-galactose is bound by residues 100–104 and 139–141; these read PFRER and FNR. The N-linked (GlcNAc...) asparagine glycan is linked to Asn154. UDP-alpha-D-galactose contacts are provided by residues 164-165, Tyr194, and Trp224; that span reads VD. Asp165 is a Mn(2+) binding site. Position 226–229 (226–229) interacts with N-acetyl-D-glucosamine; the sequence is REDD. His257 contacts Mn(2+). UDP-alpha-D-galactose is bound by residues 257 to 259 and Arg266; that span reads HLH. Cys316 and Cys324 are disulfide-bonded.

The protein belongs to the glycosyltransferase 7 family. Requires Mn(2+) as cofactor. High expression in heart, pancreas and liver, medium in placenta and kidney, low in brain, skeletal muscle and lung.

It is found in the golgi apparatus. Its subcellular location is the golgi stack membrane. It carries out the reaction 3-O-(beta-D-xylosyl)-L-seryl-[protein] + UDP-alpha-D-galactose = 3-O-(beta-D-galactosyl-(1-&gt;4)-beta-D-xylosyl)-L-seryl-[protein] + UDP + H(+). Its pathway is protein modification; protein glycosylation. Required for the biosynthesis of the tetrasaccharide linkage region of proteoglycans, especially for small proteoglycans in skin fibroblasts. The polypeptide is Beta-1,4-galactosyltransferase 7 (B4GALT7) (Homo sapiens (Human)).